Here is a 66-residue protein sequence, read N- to C-terminus: Large ribosomal subunit protein bL35 (66 aa).

Over residues 1 to 16 the composition is skewed to basic residues; that stretch reads MPKQKTHRASAKRFKR. The segment at 1-22 is disordered; the sequence is MPKQKTHRASAKRFKRTGSGGL.

The protein belongs to the bacterial ribosomal protein bL35 family.

In Streptococcus suis (strain 05ZYH33), this protein is Large ribosomal subunit protein bL35.